Consider the following 247-residue polypeptide: Protein NipSnap homolog 3A (247 aa).

Residues K48 and K166 each carry the N6-acetyllysine modification.

The protein belongs to the NipSnap family. Interacts with the Salmonella typhimurium virulence protein spiC. As to expression, ubiquitous. Highly expressed in liver, kidney and muscle. Expressed at intermediate level in brain, heart, colon, thymus, kidney, small intestine, placenta, lung, leukocytes and spleen.

Its subcellular location is the cytoplasm. The protein resides in the cytosol. This is Protein NipSnap homolog 3A (NIPSNAP3A) from Homo sapiens (Human).